We begin with the raw amino-acid sequence, 524 residues long: Lysophospholipid acyltransferase LPCAT4 (524 aa).

A run of 2 helical transmembrane segments spans residues 40 to 62 and 87 to 107; these read CLLG…FLLW and TVCH…LGFL. Residues 129–134 carry the HXXXXD motif motif; the sequence is HSTFFD. N-linked (GlcNAc...) asparagine glycosylation occurs at N152. The interval 489–524 is disordered; it reads PPHTSRGTSQTPNASSPGNPTALANGTVQAPKQKGD. Positions 493–518 are enriched in polar residues; sequence SRGTSQTPNASSPGNPTALANGTVQA.

Belongs to the 1-acyl-sn-glycerol-3-phosphate acyltransferase family. In terms of tissue distribution, widely expressed with predominant level in brain.

The protein resides in the endoplasmic reticulum membrane. It catalyses the reaction a 1-acyl-sn-glycero-3-phosphoethanolamine + an acyl-CoA = a 1,2-diacyl-sn-glycero-3-phosphoethanolamine + CoA. It carries out the reaction a 1-O-(1Z-alkenyl)-sn-glycero-3-phosphoethanolamine + an acyl-CoA = a 1-O-(1Z-alkenyl)-2-acyl-sn-glycero-3-phosphoethanolamine + CoA. The enzyme catalyses a 1-acyl-sn-glycero-3-phosphocholine + an acyl-CoA = a 1,2-diacyl-sn-glycero-3-phosphocholine + CoA. The catalysed reaction is a 1-O-alkyl-sn-glycero-3-phosphocholine + acetyl-CoA = a 1-O-alkyl-2-acetyl-sn-glycero-3-phosphocholine + CoA. It catalyses the reaction a 1-acyl-sn-glycero-3-phospho-L-serine + an acyl-CoA = a 1,2-diacyl-sn-glycero-3-phospho-L-serine + CoA. It carries out the reaction octanoyl-CoA + a 1-acyl-sn-glycero-3-phosphoethanolamine = 1-acyl-2-octanoyl-sn-glycero-3-phosphoethanolamine + CoA. The enzyme catalyses a 1-acyl-sn-glycero-3-phosphoethanolamine + hexadecanoyl-CoA = 1-acyl-2-hexadecanoyl-sn-glycero-3-phosphoethanolamine + CoA. The catalysed reaction is a 1-acyl-sn-glycero-3-phosphoethanolamine + octadecanoyl-CoA = 1-acyl-2-octadecanoyl-sn-glycero-3-phosphoethanolamine + CoA. It catalyses the reaction a 1-acyl-sn-glycero-3-phosphoethanolamine + (9Z)-octadecenoyl-CoA = 1-acyl-2-(9Z)-octadecenoyl-sn-glycero-3-phosphoethanolamine + CoA. It carries out the reaction a 1-acyl-sn-glycero-3-phosphoethanolamine + (5Z,8Z,11Z,14Z)-eicosatetraenoyl-CoA = 1-acyl-2-(5Z,8Z,11Z,14Z)-eicosatetraenoyl-sn-glycero-3-phosphoethanolamine + CoA. The enzyme catalyses a 1-O-(1Z-alkenyl)-sn-glycero-3-phosphoethanolamine + octanoyl-CoA = 1-O-(1Z)-alkenyl-2-octanoyl-sn-glycero-3-phosphoethanolamine + CoA. The catalysed reaction is a 1-O-(1Z-alkenyl)-sn-glycero-3-phosphoethanolamine + hexadecanoyl-CoA = 1-O-(1Z)-alkenyl-2-hexadecanoyl-sn-glycero-3-phosphoethanolamine + CoA. It catalyses the reaction a 1-O-(1Z-alkenyl)-sn-glycero-3-phosphoethanolamine + octadecanoyl-CoA = 1-O-(1Z)-alkenyl-2-octadecanoyl-sn-glycero-3-phosphoethanolamine + CoA. It carries out the reaction a 1-O-(1Z-alkenyl)-sn-glycero-3-phosphoethanolamine + (9Z)-octadecenoyl-CoA = 1-O-(1Z)-alkenyl-2-(9Z)-octadecenoyl-sn-glycero-3-phosphoethanolamine + CoA. The enzyme catalyses a 1-O-(1Z-alkenyl)-sn-glycero-3-phosphoethanolamine + (5Z,8Z,11Z,14Z)-eicosatetraenoyl-CoA = 1-O-(1Z)-alkenyl-2-(5Z,8Z,11Z,14Z)-eicosatetraenoyl-sn-glycero-3-phosphoethanolamine + CoA. The catalysed reaction is a 1-acyl-sn-glycero-3-phosphocholine + hexadecanoyl-CoA = 1-acyl-2-hexadecanoyl-sn-glycero-3-phosphocholine + CoA. It catalyses the reaction a 1-acyl-sn-glycero-3-phosphocholine + (9Z)-octadecenoyl-CoA = a 1-acyl-2-(9Z)-octadecenoyl-sn-glycero-3-phosphocholine + CoA. It carries out the reaction 1-O-hexadecyl-sn-glycero-3-phosphocholine + (9Z)-octadecenoyl-CoA = 1-O-hexadecyl-2-(9Z)-octadecenoyl-sn-glycero-3-phosphocholine + CoA. The enzyme catalyses 1-O-hexadecyl-sn-glycero-3-phosphocholine + (5Z,8Z,11Z,14Z)-eicosatetraenoyl-CoA = 1-O-hexadecyl-2-(5Z,8Z,11Z,14Z)-eicosatetraenoyl-sn-glycero-3-phosphocholine + CoA. The catalysed reaction is 1-hexadecanoyl-sn-glycero-3-phospho-L-serine + (9Z)-octadecenoyl-CoA = 1-hexadecanoyl-2-(9Z-octadecenoyl)-sn-glycero-3-phospho-L-serine + CoA. It catalyses the reaction 1-octadecanoyl-sn-glycero-3-phospho-(1'-sn-glycerol) + (9Z)-octadecenoyl-CoA = 1-octadecanoyl-2-(9Z-octadecenoyl)-sn-glycero-3-phospho-(1'-sn-glycerol) + CoA. It carries out the reaction 1-octadecanoyl-sn-glycero-3-phospho-(1'-sn-glycerol) + (5Z,8Z,11Z,14Z)-eicosatetraenoyl-CoA = 1-octadecanoyl-2-(5Z,8Z,11Z,14Z-eicosatetraenoyl)-sn-glycero-3-phospho-(1'-sn-glycerol) + CoA. The protein operates within lipid metabolism; phospholipid metabolism. Displays acyl-CoA-dependent lysophospholipid acyltransferase activity with a subset of lysophospholipids as substrates; converts lysophosphatidylethanolamine to phosphatidylethanolamine, lysophosphatidylcholine to phosphatidycholine, 1-alkenyl-lysophatidylethanolamine to 1-alkenyl-phosphatidylethanolamine, lysophosphatidylglycerol and alkyl-lysophosphatidylcholine to phosphatidylglycerol and alkyl-phosphatidylcholine, respectively. In contrast, has no lysophosphatidylinositol, glycerol-3-phosphate, diacylglycerol or lysophosphatidic acid acyltransferase activity. Prefers long chain acyl-CoAs (C16, C18) as acyl donors. The sequence is that of Lysophospholipid acyltransferase LPCAT4 (LPCAT4) from Homo sapiens (Human).